The sequence spans 440 residues: NADH-quinone oxidoreductase subunit D 1 (440 aa).

This sequence belongs to the complex I 49 kDa subunit family. In terms of assembly, NDH-1 is composed of 14 different subunits. Subunits NuoB, C, D, E, F, and G constitute the peripheral sector of the complex.

Its subcellular location is the cell membrane. It catalyses the reaction a quinone + NADH + 5 H(+)(in) = a quinol + NAD(+) + 4 H(+)(out). Functionally, NDH-1 shuttles electrons from NADH, via FMN and iron-sulfur (Fe-S) centers, to quinones in the respiratory chain. The immediate electron acceptor for the enzyme in this species is believed to be a menaquinone. Couples the redox reaction to proton translocation (for every two electrons transferred, four hydrogen ions are translocated across the cytoplasmic membrane), and thus conserves the redox energy in a proton gradient. The protein is NADH-quinone oxidoreductase subunit D 1 of Streptomyces griseus subsp. griseus (strain JCM 4626 / CBS 651.72 / NBRC 13350 / KCC S-0626 / ISP 5235).